The primary structure comprises 379 residues: Cytochrome b (379 aa).

A run of 4 helical transmembrane segments spans residues 33–53, 77–98, 113–133, and 178–198; these read FGSL…FLAM, WLIR…FIHV, WNIG…GYVL, and FFAF…VHLL. Heme b contacts are provided by histidine 83 and histidine 97. Heme b contacts are provided by histidine 182 and histidine 196. An a ubiquinone-binding site is contributed by histidine 201. The next 4 helical transmembrane spans lie at 226-246, 288-308, 320-340, and 347-367; these read IKDL…ALFF, LGGV…PLLN, ITQT…WIGG, and FTTI…ILMP.

This sequence belongs to the cytochrome b family. The cytochrome bc1 complex contains 11 subunits: 3 respiratory subunits (MT-CYB, CYC1 and UQCRFS1), 2 core proteins (UQCRC1 and UQCRC2) and 6 low-molecular weight proteins (UQCRH/QCR6, UQCRB/QCR7, UQCRQ/QCR8, UQCR10/QCR9, UQCR11/QCR10 and a cleavage product of UQCRFS1). This cytochrome bc1 complex then forms a dimer. Heme b serves as cofactor.

It is found in the mitochondrion inner membrane. Its function is as follows. Component of the ubiquinol-cytochrome c reductase complex (complex III or cytochrome b-c1 complex) that is part of the mitochondrial respiratory chain. The b-c1 complex mediates electron transfer from ubiquinol to cytochrome c. Contributes to the generation of a proton gradient across the mitochondrial membrane that is then used for ATP synthesis. This chain is Cytochrome b (MT-CYB), found in Akodon affinis (Colombian grass mouse).